We begin with the raw amino-acid sequence, 195 residues long: BH3-interacting domain death agonist (195 aa).

N-acetylmethionine is present on Met1. The span at 58–69 (TDGSQASRSFNQ) shows a compositional bias: polar residues. A disordered region spans residues 58-77 (TDGSQASRSFNQGRIEPDSE). Ser78 carries the phosphoserine modification. The BH3 signature appears at 87–100 (ARHLAQIGDEMDHN).

As to quaternary structure, forms heterodimers either with the pro-apoptotic protein BAX or the anti-apoptotic protein BCL2. Interacts with PLEKHN1. Interacts with ITCH. Interacts with MTCH2. TNF-alpha induces caspase-mediated cleavage into a major p15 and minor p13 and p11 products. Cleaved by CASP6 into a major p15 and minor p13 products, leading to release of cytochrome c and subsequent nonalcoholic steatohepatitis. In terms of processing, ubiquitinated by ITCH; ubiquitination results in proteasome-dependent degradation.

Its subcellular location is the cytoplasm. It localises to the mitochondrion membrane. The protein resides in the mitochondrion outer membrane. Its function is as follows. Induces caspases and apoptosis. Counters the protective effect of BCL2. Induces caspase activation and apoptosis. Allows the release of cytochrome c. This is BH3-interacting domain death agonist (Bid) from Mus musculus (Mouse).